Here is a 220-residue protein sequence, read N- to C-terminus: Phosphatidylserine decarboxylase proenzyme (220 aa).

S189 serves as the catalytic Schiff-base intermediate with substrate; via pyruvic acid. Pyruvic acid (Ser); by autocatalysis is present on S189.

This sequence belongs to the phosphatidylserine decarboxylase family. PSD-A subfamily. In terms of assembly, heterodimer of a large membrane-associated beta subunit and a small pyruvoyl-containing alpha subunit. Pyruvate serves as cofactor. Post-translationally, is synthesized initially as an inactive proenzyme. Formation of the active enzyme involves a self-maturation process in which the active site pyruvoyl group is generated from an internal serine residue via an autocatalytic post-translational modification. Two non-identical subunits are generated from the proenzyme in this reaction, and the pyruvate is formed at the N-terminus of the alpha chain, which is derived from the carboxyl end of the proenzyme. The post-translation cleavage follows an unusual pathway, termed non-hydrolytic serinolysis, in which the side chain hydroxyl group of the serine supplies its oxygen atom to form the C-terminus of the beta chain, while the remainder of the serine residue undergoes an oxidative deamination to produce ammonia and the pyruvoyl prosthetic group on the alpha chain.

It is found in the cell membrane. The enzyme catalyses a 1,2-diacyl-sn-glycero-3-phospho-L-serine + H(+) = a 1,2-diacyl-sn-glycero-3-phosphoethanolamine + CO2. It functions in the pathway phospholipid metabolism; phosphatidylethanolamine biosynthesis; phosphatidylethanolamine from CDP-diacylglycerol: step 2/2. Its function is as follows. Catalyzes the formation of phosphatidylethanolamine (PtdEtn) from phosphatidylserine (PtdSer). The chain is Phosphatidylserine decarboxylase proenzyme from Pelobacter propionicus (strain DSM 2379 / NBRC 103807 / OttBd1).